A 182-amino-acid polypeptide reads, in one-letter code: Small ribosomal subunit protein uS4c (182 aa).

The interval 13 to 34 (GLTSKRPRSGSDPKNQLRSGKR) is disordered. Residues 82 to 143 (MRLDNILFRL…KQRSKALIQN (62 aa)) form the S4 RNA-binding domain.

Belongs to the universal ribosomal protein uS4 family. As to quaternary structure, part of the 30S ribosomal subunit. Contacts protein S5. The interaction surface between S4 and S5 is involved in control of translational fidelity.

Its subcellular location is the plastid. It localises to the chloroplast. Functionally, one of the primary rRNA binding proteins, it binds directly to 16S rRNA where it nucleates assembly of the body of the 30S subunit. In terms of biological role, with S5 and S12 plays an important role in translational accuracy. The chain is Small ribosomal subunit protein uS4c (rps4) from Iris lutescens (Crimean iris).